A 694-amino-acid chain; its full sequence is uncharacterized protein (694 aa).

Residues 17–168 enclose the Resolvase/invertase-type recombinase catalytic domain; the sequence is DAFLYVRQSS…GGILNKARRG (152 aa). The active-site O-(5'-phospho-DNA)-serine intermediate is the Ser25. A DNA-binding region (recombinase) is located at residues 175 to 316; it reads PIGLVYTPDA…QAALEQNATG (142 aa). Residues 386 to 406 form a helical membrane-spanning segment; sequence AVSALLLEVMAPAAIDVALAV.

Its subcellular location is the membrane. This is an uncharacterized protein from Sinorhizobium fredii (strain NBRC 101917 / NGR234).